We begin with the raw amino-acid sequence, 173 residues long: uncharacterized protein (173 aa).

Positions 1–15 (MERKLSQRAGNTFKG) are cleaved as a propeptide — leader sequence. Phe16 is modified (N-methylphenylalanine). The chain crosses the membrane as a helical span at residues 16 to 37 (FTLVEVLITLAIISLVFSLILI).

It is found in the membrane. This is an uncharacterized protein from Aquifex aeolicus (strain VF5).